The chain runs to 40 residues: Large ribosomal subunit protein bL36A (40 aa).

Belongs to the bacterial ribosomal protein bL36 family.

The protein is Large ribosomal subunit protein bL36A of Paenarthrobacter aurescens (strain TC1).